Reading from the N-terminus, the 399-residue chain is CCA-adding enzyme (399 aa).

Residues Gly32 and Arg35 each contribute to the ATP site. CTP is bound by residues Gly32 and Arg35. Positions 45 and 47 each coordinate Mg(2+). Arg116, Asp159, Arg162, Arg165, and Arg168 together coordinate ATP. Residues Arg116, Asp159, Arg162, Arg165, and Arg168 each coordinate CTP.

It belongs to the tRNA nucleotidyltransferase/poly(A) polymerase family. Bacterial CCA-adding enzyme type 3 subfamily. In terms of assembly, homodimer. It depends on Mg(2+) as a cofactor.

The enzyme catalyses a tRNA precursor + 2 CTP + ATP = a tRNA with a 3' CCA end + 3 diphosphate. The catalysed reaction is a tRNA with a 3' CCA end + 2 CTP + ATP = a tRNA with a 3' CCACCA end + 3 diphosphate. Functionally, catalyzes the addition and repair of the essential 3'-terminal CCA sequence in tRNAs without using a nucleic acid template. Adds these three nucleotides in the order of C, C, and A to the tRNA nucleotide-73, using CTP and ATP as substrates and producing inorganic pyrophosphate. tRNA 3'-terminal CCA addition is required both for tRNA processing and repair. Also involved in tRNA surveillance by mediating tandem CCA addition to generate a CCACCA at the 3' terminus of unstable tRNAs. While stable tRNAs receive only 3'-terminal CCA, unstable tRNAs are marked with CCACCA and rapidly degraded. This is CCA-adding enzyme from Streptococcus pneumoniae serotype 4 (strain ATCC BAA-334 / TIGR4).